The following is a 324-amino-acid chain: CYFIP-related Rac1 interactor B (324 aa).

A lipid anchor (N-myristoyl glycine) is attached at glycine 2. Lysine 74 participates in a covalent cross-link: Glycyl lysine isopeptide (Lys-Gly) (interchain with G-Cter in ubiquitin).

This sequence belongs to the CYRI family. As to quaternary structure, interacts with RAC1 (GTP-bound form preferentially). Ubiquitinated at Lys-74 upon Salmonella bacterial infection.

It localises to the membrane. Its subcellular location is the mitochondrion. Its function is as follows. Negatively regulates RAC1 signaling and RAC1-driven cytoskeletal remodeling. Regulates chemotaxis, cell migration and epithelial polarization by controlling the polarity, plasticity, duration and extent of protrusions. Limits Rac1 mediated activation of the Scar/WAVE complex, focuses protrusion signals and regulates pseudopod complexity by inhibiting Scar/WAVE-induced actin polymerization. Protects against Salmonella bacterial infection. Attenuates processes such as macropinocytosis, phagocytosis and cell migration and restrict sopE-mediated bacterial entry. Also restricts infection mediated by Mycobacterium tuberculosis and Listeria monocytogenes. Involved in the regulation of mitochondrial dynamics and oxidative stress. In Homo sapiens (Human), this protein is CYFIP-related Rac1 interactor B.